Reading from the N-terminus, the 306-residue chain is Large ribosomal subunit protein mL45 (306 aa).

This sequence belongs to the mitochondrion-specific ribosomal protein mL45 family. As to quaternary structure, component of the mitochondrial ribosome large subunit (39S) which comprises a 16S rRNA and about 50 distinct proteins.

Its subcellular location is the mitochondrion. Component of the mitochondrial large ribosomal subunit (mt-LSU). Within the mitochondrial ribosomes, required to direct the nascent polypeptide toward the tunnel exit and position the exit at a distance from the membrane surface. This is Large ribosomal subunit protein mL45 (MRPL45) from Bos taurus (Bovine).